The sequence spans 250 residues: tRNA (guanine-N(1)-)-methyltransferase (250 aa).

S-adenosyl-L-methionine contacts are provided by residues glycine 116 and isoleucine 136–leucine 141.

The protein belongs to the RNA methyltransferase TrmD family. As to quaternary structure, homodimer.

It is found in the cytoplasm. The enzyme catalyses guanosine(37) in tRNA + S-adenosyl-L-methionine = N(1)-methylguanosine(37) in tRNA + S-adenosyl-L-homocysteine + H(+). Specifically methylates guanosine-37 in various tRNAs. The chain is tRNA (guanine-N(1)-)-methyltransferase from Pseudomonas putida (strain GB-1).